The primary structure comprises 162 residues: Phosphopantetheine adenylyltransferase (162 aa).

T10 lines the substrate pocket. ATP is bound by residues 10–11 and H18; that span reads TF. Substrate is bound by residues K42, L74, and R88. ATP is bound by residues 89-91, E99, and 124-130; these read GLR and FSCISST.

Belongs to the bacterial CoaD family. In terms of assembly, homohexamer. Requires Mg(2+) as cofactor.

It localises to the cytoplasm. The catalysed reaction is (R)-4'-phosphopantetheine + ATP + H(+) = 3'-dephospho-CoA + diphosphate. Its pathway is cofactor biosynthesis; coenzyme A biosynthesis; CoA from (R)-pantothenate: step 4/5. Reversibly transfers an adenylyl group from ATP to 4'-phosphopantetheine, yielding dephospho-CoA (dPCoA) and pyrophosphate. This chain is Phosphopantetheine adenylyltransferase, found in Francisella tularensis subsp. mediasiatica (strain FSC147).